A 279-amino-acid polypeptide reads, in one-letter code: Inorganic pyrophosphatase 2 (279 aa).

Aspartate 12 acts as the Nucleophile in catalysis. The Mg(2+) site is built by aspartate 12 and aspartate 14. Aspartate 14 serves as the catalytic Proton donor. The substrate site is built by aspartate 23 and aspartate 98. Aspartate 182 is a Mg(2+) binding site.

The protein belongs to the HAD-like hydrolase superfamily. As to quaternary structure, tetramer. The cofactor is Mg(2+).

The enzyme catalyses diphosphate + H2O = 2 phosphate + H(+). Its function is as follows. Catalyzes the specific cleavage of pyrophosphate. This Arabidopsis thaliana (Mouse-ear cress) protein is Inorganic pyrophosphatase 2.